The sequence spans 690 residues: uncharacterized protein (690 aa).

The disordered stretch occupies residues 553–601 (DESELLENEDKSESLENEDKSESLENEDKSESLENEDKSESLENEKKEK). Residues 560–601 (NEDKSESLENEDKSESLENEDKSESLENEDKSESLENEKKEK) show a composition bias toward basic and acidic residues.

The protein belongs to the glycosyltransferase 2 family.

This is an uncharacterized protein from Rickettsia bellii (strain RML369-C).